A 411-amino-acid polypeptide reads, in one-letter code: Methylthioribose-1-phosphate isomerase (411 aa).

Aspartate 284 acts as the Proton donor in catalysis.

It belongs to the eIF-2B alpha/beta/delta subunits family. MtnA subfamily.

The protein localises to the cytoplasm. It localises to the nucleus. The enzyme catalyses 5-(methylsulfanyl)-alpha-D-ribose 1-phosphate = 5-(methylsulfanyl)-D-ribulose 1-phosphate. The protein operates within amino-acid biosynthesis; L-methionine biosynthesis via salvage pathway; L-methionine from S-methyl-5-thio-alpha-D-ribose 1-phosphate: step 1/6. Catalyzes the interconversion of methylthioribose-1-phosphate (MTR-1-P) into methylthioribulose-1-phosphate (MTRu-1-P). The protein is Methylthioribose-1-phosphate isomerase of Komagataella phaffii (strain GS115 / ATCC 20864) (Yeast).